The following is a 211-amino-acid chain: Nucleoside triphosphate pyrophosphatase (211 aa).

Asp75 serves as the catalytic Proton acceptor.

Belongs to the Maf family. A divalent metal cation is required as a cofactor.

It localises to the cytoplasm. The catalysed reaction is a ribonucleoside 5'-triphosphate + H2O = a ribonucleoside 5'-phosphate + diphosphate + H(+). It catalyses the reaction a 2'-deoxyribonucleoside 5'-triphosphate + H2O = a 2'-deoxyribonucleoside 5'-phosphate + diphosphate + H(+). Nucleoside triphosphate pyrophosphatase. May have a dual role in cell division arrest and in preventing the incorporation of modified nucleotides into cellular nucleic acids. In Prochlorococcus marinus (strain NATL1A), this protein is Nucleoside triphosphate pyrophosphatase.